We begin with the raw amino-acid sequence, 449 residues long: GTPase Der (449 aa).

EngA-type G domains are found at residues 3–167 and 178–351; these read AVIA…PTSE and PRIA…IDSR. Residues 9-16, 56-60, 119-122, 184-191, 231-235, and 296-299 contribute to the GTP site; these read GRPNVGKS, DTGGF, NKMD, DTAGM, and NKWD. The region spanning 352–436 is the KH-like domain; that stretch reads RHFSTAELNR…PLRLVFRQGE (85 aa).

It belongs to the TRAFAC class TrmE-Era-EngA-EngB-Septin-like GTPase superfamily. EngA (Der) GTPase family. In terms of assembly, associates with the 50S ribosomal subunit.

In terms of biological role, GTPase that plays an essential role in the late steps of ribosome biogenesis. The sequence is that of GTPase Der from Acidithiobacillus ferrooxidans (strain ATCC 23270 / DSM 14882 / CIP 104768 / NCIMB 8455) (Ferrobacillus ferrooxidans (strain ATCC 23270)).